A 264-amino-acid polypeptide reads, in one-letter code: DNA repair protein RecO (264 aa).

The protein belongs to the RecO family.

Its function is as follows. Involved in DNA repair and RecF pathway recombination. This is DNA repair protein RecO from Prosthecochloris aestuarii (strain DSM 271 / SK 413).